The sequence spans 487 residues: Homeobox protein homothorax (487 aa).

Disordered stretches follow at residues 25 to 49 (YDPHAGHRPPGLQGLPSHHSPHMTH), 210 to 292 (DTTK…SSLN), and 333 to 369 (NFGTSASGDASNASIGSGEGTGEEDDDASGKKNQKKR). One can recognise an MEIS N-terminal domain in the interval 127 to 211 (GGDVCSSESF…IDLVIDERDT (85 aa)). Composition is skewed to polar residues over residues 227-237 (NADSTSHTDGA) and 333-345 (NFGTSASGDASNA). A DNA-binding region (homeobox; TALE-type) is located at residues 365–427 (NQKKRGIFPK…NARRRIVQPM (63 aa)).

This sequence belongs to the TALE/MEIS homeobox family. In terms of assembly, interacts with exd; required for nuclear translocation of exd. As to expression, in the wing disk, the expression is present in the regions corresponding to notum, wing hinge and ventral pleura. In the leg disk, the expression is in the periphery region, corresponding to the proximal segments of the legs. In the antennal disk, the expression is in all but the arista region. In the eye disk, the expression is strong in the anterior region surrounding the eye field, including the regions corresponding to ptilinum, ocellus and head capsules, and weak in the posterior and lateral margins of the eye disk. Expressed specifically in maturating inner photoreceptors of the DRA and maintained through adulthood.

The protein resides in the nucleus. All isoforms are required for patterning of the embryonic cuticle. Acts with exd to delimit the eye field and prevent inappropriate eye development. Isoforms that carry the homeodomain are required for proper localization of chordotonal organs within the peripheral nervous system and antennal identity; required to activate antennal-specific genes, such as sal and to repress the leg-like expression of dac. Necessary for the nuclear localization of the essential HOX cofactor, extradenticle (exd). Both necessary and sufficient for inner photoreceptors to adopt the polarization-sensitive 'dorsal rim area' (DRA) of the eye fate instead of the color-sensitive default state. This occurs by increasing rhabdomere size and uncoupling R7-R8 communication to allow both cells to express the same opsin rather than different ones as required for color vision. This Drosophila melanogaster (Fruit fly) protein is Homeobox protein homothorax.